Reading from the N-terminus, the 146-residue chain is Hemoglobin cathodic subunit beta (146 aa).

The 145-residue stretch at 2 to 146 folds into the Globin domain; it reads HFSDAERDAI…VAAALSSRYF (145 aa). Positions 63 and 92 each coordinate heme b.

The protein belongs to the globin family. As to quaternary structure, heterotetramer of two alpha chains and two beta chains. Red blood cells.

Functionally, involved in oxygen transport from gills to the various peripheral tissues. In Hoplosternum littorale (Hassar), this protein is Hemoglobin cathodic subunit beta (hbb).